Here is a 144-residue protein sequence, read N- to C-terminus: MTSLSAKDKDVVKAFWAKISSKATDIGADALGRMLVVYPQTKTYFAHWKDLSPGSAPVKKHGQTVMGGVAEAVGKIDNLTAGLLNLSELHAFTLRVDPANFKILSHNILVVLAIMFPNDFTPEVHVAMDKFLAALALALAEKYR.

In terms of domain architecture, Globin spans 3–144; that stretch reads SLSAKDKDVV…LALALAEKYR (142 aa). H61 serves as a coordination point for O2. Heme b is bound at residue H90.

The protein belongs to the globin family. As to quaternary structure, heterotetramer of two alpha chains and two beta chains. Red blood cells.

In terms of biological role, involved in oxygen transport from gills to the various peripheral tissues. The protein is Hemoglobin embryonic subunit alpha of Oryzias latipes (Japanese rice fish).